The following is a 102-amino-acid chain: uncharacterized protein (102 aa).

[3Fe-4S] cluster contacts are provided by Cys-10, Cys-16, and Cys-55. A disordered region spans residues 66 to 102; it reads DAGDDERASADPARSPAEAERHAAKDQRIPGGHDGTV. The span at 82–93 shows a compositional bias: basic and acidic residues; sequence AEAERHAAKDQR.

The cofactor is [3Fe-4S] cluster.

Electron transport protein for the cytochrome systems. This is an uncharacterized protein from Sinorhizobium fredii (strain NBRC 101917 / NGR234).